Consider the following 228-residue polypeptide: Large ribosomal subunit protein bL25 (228 aa).

The interval 196 to 228 (EEAAVAEAQSAESAEGKAEAEAEATNEKNKSEA) is disordered. The span at 209–228 (AEGKAEAEAEATNEKNKSEA) shows a compositional bias: basic and acidic residues.

It belongs to the bacterial ribosomal protein bL25 family. CTC subfamily. In terms of assembly, part of the 50S ribosomal subunit; part of the 5S rRNA/L5/L18/L25 subcomplex. Contacts the 5S rRNA. Binds to the 5S rRNA independently of L5 and L18.

Functionally, this is one of the proteins that binds to the 5S RNA in the ribosome where it forms part of the central protuberance. This chain is Large ribosomal subunit protein bL25, found in Methylorubrum extorquens (strain CM4 / NCIMB 13688) (Methylobacterium extorquens).